The primary structure comprises 473 residues: UDP-N-acetylmuramoylalanine--D-glutamate ligase (473 aa).

120–126 is an ATP binding site; that stretch reads GSNGKTT.

The protein belongs to the MurCDEF family.

Its subcellular location is the cytoplasm. It carries out the reaction UDP-N-acetyl-alpha-D-muramoyl-L-alanine + D-glutamate + ATP = UDP-N-acetyl-alpha-D-muramoyl-L-alanyl-D-glutamate + ADP + phosphate + H(+). It participates in cell wall biogenesis; peptidoglycan biosynthesis. Cell wall formation. Catalyzes the addition of glutamate to the nucleotide precursor UDP-N-acetylmuramoyl-L-alanine (UMA). This chain is UDP-N-acetylmuramoylalanine--D-glutamate ligase, found in Nitrosospira multiformis (strain ATCC 25196 / NCIMB 11849 / C 71).